The primary structure comprises 160 residues: UPF0178 protein BPP1051 (160 aa).

It belongs to the UPF0178 family.

This chain is UPF0178 protein BPP1051, found in Bordetella parapertussis (strain 12822 / ATCC BAA-587 / NCTC 13253).